The following is a 336-amino-acid chain: Phosphate acyltransferase (336 aa).

Belongs to the PlsX family. In terms of assembly, homodimer. Probably interacts with PlsY.

The protein resides in the cytoplasm. It catalyses the reaction a fatty acyl-[ACP] + phosphate = an acyl phosphate + holo-[ACP]. It participates in lipid metabolism; phospholipid metabolism. Its function is as follows. Catalyzes the reversible formation of acyl-phosphate (acyl-PO(4)) from acyl-[acyl-carrier-protein] (acyl-ACP). This enzyme utilizes acyl-ACP as fatty acyl donor, but not acyl-CoA. The protein is Phosphate acyltransferase of Pseudomonas putida (strain ATCC 700007 / DSM 6899 / JCM 31910 / BCRC 17059 / LMG 24140 / F1).